A 306-amino-acid polypeptide reads, in one-letter code: Low-density lipoprotein receptor class A domain-containing protein 4 (306 aa).

Over M1–E64 the chain is Lumenal. Residues A11–L48 enclose the LDL-receptor class A domain. 2 cysteine pairs are disulfide-bonded: C19/C38 and C32/C47. The helical transmembrane segment at F65 to L85 threads the bilayer. Residues L86–V306 lie on the Cytoplasmic side of the membrane. A disordered region spans residues P100 to G127. Residues P180–Y183 carry the PPxY motif 1 motif. The SMAD interaction motif (SIM) motif lies at P208–R211. Positions P252–Y255 match the PPxY motif 2 motif. The interval F268 to V306 is disordered. Residues H269 to S279 are compositionally biased toward basic residues. Residues P281–G290 are compositionally biased toward polar residues. The span at K296–V306 shows a compositional bias: basic and acidic residues.

The protein belongs to the PMEPA1 family. As to quaternary structure, interacts with PMEPA1. Interacts (via the SMAD interaction motif) with SMAD2 and SMAD3. Detected in all tissues tested.

The protein resides in the early endosome membrane. Functions as a negative regulator of TGF-beta signaling and thereby probably plays a role in cell proliferation, differentiation, apoptosis, motility, extracellular matrix production and immunosuppression. In the canonical TGF-beta pathway, ZFYVE9/SARA recruits the intracellular signal transducer and transcriptional modulators SMAD2 and SMAD3 to the TGF-beta receptor. Phosphorylated by the receptor, SMAD2 and SMAD3 then form a heteromeric complex with SMAD4 that translocates to the nucleus to regulate transcription. Through interaction with SMAD2 and SMAD3, LDLRAD4 may compete with ZFYVE9 and SMAD4 and prevent propagation of the intracellular signal. This Mus musculus (Mouse) protein is Low-density lipoprotein receptor class A domain-containing protein 4 (Ldlrad4).